The sequence spans 107 residues: uncharacterized protein (107 aa).

Residues 25 to 42 (LSLCSVLLSWLICAMCLW) form a helical membrane-spanning segment.

It is found in the host membrane. This is an uncharacterized protein from Galliformes (FAdV-1).